A 369-amino-acid polypeptide reads, in one-letter code: uncharacterized protein (369 aa).

4 disordered regions span residues 1–42 (MRAA…NNNS), 60–107 (PSDL…KEDD), 146–177 (ALSM…NSSG), and 214–369 (LSSH…GDDD). The segment covering 12-24 (VGPNNNNQSNTIN) has biased composition (polar residues). Low complexity-rich tracts occupy residues 30 to 42 (SNSN…NNNS) and 70 to 86 (YHSN…NSSS). The span at 87–101 (AITSGTVAPSSSMNN) shows a compositional bias: polar residues. Positions 155 to 169 (DSESDISEKEDDNDG) are enriched in acidic residues. Positions 219–324 (NNNNNSSNNN…NNNNNNSNIY (106 aa)) are enriched in low complexity.

This is an uncharacterized protein from Dictyostelium discoideum (Social amoeba).